The chain runs to 132 residues: Small ribosomal subunit protein uS8 (132 aa).

This sequence belongs to the universal ribosomal protein uS8 family. As to quaternary structure, part of the 30S ribosomal subunit. Contacts proteins S5 and S12.

Its function is as follows. One of the primary rRNA binding proteins, it binds directly to 16S rRNA central domain where it helps coordinate assembly of the platform of the 30S subunit. The chain is Small ribosomal subunit protein uS8 from Stenotrophomonas maltophilia (strain R551-3).